Consider the following 204-residue polypeptide: Peptide deformylase (204 aa).

Positions 131 and 174 each coordinate Fe cation. The active site involves E175. H178 serves as a coordination point for Fe cation.

It belongs to the polypeptide deformylase family. Requires Fe(2+) as cofactor.

The catalysed reaction is N-terminal N-formyl-L-methionyl-[peptide] + H2O = N-terminal L-methionyl-[peptide] + formate. Functionally, removes the formyl group from the N-terminal Met of newly synthesized proteins. Requires at least a dipeptide for an efficient rate of reaction. N-terminal L-methionine is a prerequisite for activity but the enzyme has broad specificity at other positions. This is Peptide deformylase from Streptococcus gordonii (strain Challis / ATCC 35105 / BCRC 15272 / CH1 / DL1 / V288).